The primary structure comprises 183 residues: Oligoribonuclease (183 aa).

Residues 10 to 173 (LIWIDLEMTG…ADIRESIAEL (164 aa)) form the Exonuclease domain. The active site involves Y131.

The protein belongs to the oligoribonuclease family.

Its subcellular location is the cytoplasm. Functionally, 3'-to-5' exoribonuclease specific for small oligoribonucleotides. The sequence is that of Oligoribonuclease from Idiomarina loihiensis (strain ATCC BAA-735 / DSM 15497 / L2-TR).